We begin with the raw amino-acid sequence, 389 residues long: Na(+)/H(+) antiporter NhaA (389 aa).

A run of 11 helical transmembrane segments spans residues 17 to 37 (ILLLIAVAFAMLMANSPLAGF), 59 to 79 (LLLWINDGLMALFFLLIGLEV), 95 to 115 (SLPTFAAIGGMLVPAGIYLLF), 124 to 144 (AGWAIPAATDIAFALGIMALL), 154 to 174 (VFLLALAIIDDLGVIVIIALF), 177 to 197 (SDLSTVSLIIASIAIVGLVAL), 213 to 233 (LILWVAVLKSGVHATLAGVII), 261 to 281 (FLILPVFAFANAGVALGNMSL), 292 to 312 (IALGLMLGKPIGVMLFSFVAV), 328 to 348 (IAPVAAMCGIGFTMSMFIASL), and 363 to 383 (LGTLMGSIFAALIGYFWLSKV).

The protein belongs to the NhaA Na(+)/H(+) (TC 2.A.33) antiporter family.

It is found in the cell inner membrane. It carries out the reaction Na(+)(in) + 2 H(+)(out) = Na(+)(out) + 2 H(+)(in). Functionally, na(+)/H(+) antiporter that extrudes sodium in exchange for external protons. This Shewanella oneidensis (strain ATCC 700550 / JCM 31522 / CIP 106686 / LMG 19005 / NCIMB 14063 / MR-1) protein is Na(+)/H(+) antiporter NhaA.